Here is a 145-residue protein sequence, read N- to C-terminus: Lysozyme C (145 aa).

The signal sequence occupies residues 1–19 (MLFFGFLLAFLSAVPGTEG). The C-type lysozyme domain maps to 20–145 (EIIPRCELVK…RDLSSYVKGC (126 aa)). Disulfide bonds link cysteine 25–cysteine 145, cysteine 49–cysteine 133, cysteine 82–cysteine 98, and cysteine 94–cysteine 112. Catalysis depends on residues glutamate 54 and aspartate 70.

The protein belongs to the glycosyl hydrolase 22 family. Monomer.

Its subcellular location is the secreted. It catalyses the reaction Hydrolysis of (1-&gt;4)-beta-linkages between N-acetylmuramic acid and N-acetyl-D-glucosamine residues in a peptidoglycan and between N-acetyl-D-glucosamine residues in chitodextrins.. Functionally, lysozymes have primarily a bacteriolytic function; those in tissues and body fluids are associated with the monocyte-macrophage system and enhance the activity of immunoagents. This chain is Lysozyme C (LYZ), found in Opisthocomus hoazin (Hoatzin).